We begin with the raw amino-acid sequence, 586 residues long: Merlin (586 aa).

Serine 9 is modified (phosphoserine). Residues 18–307 enclose the FERM domain; that stretch reads FTVRIVTMDA…GNHDLFMRRR (290 aa). The tract at residues 325 to 354 is disordered; it reads KARKQMERQRLAREKQMREEAERSRDEPER. Phosphoserine; by PAK is present on serine 514. The interval 557–586 is disordered; it reads LHSEHSDSGTSSKHNTIKKPQAQGRRPICI.

As to quaternary structure, interacts with NHERF1, HGS and AGAP2. Interacts with SGSM3. Interacts (via FERM domain) with MPP1. Interacts with LAYN and WWC1. Interacts with the CUL4A-RBX1-DDB1-VprBP/DCAF1 E3 ubiquitin-protein ligase complex. The unphosphorylated form interacts (via FERM domain) with VPRBP/DCAF1. Interacts (via FERM domain) with NOP53; the interaction is direct. Interacts with SCHIP1; the interaction is direct. Ubiquitinated by the CUL4A-RBX1-DDB1-DCAF1/VprBP E3 ubiquitin-protein ligase complex for ubiquitination and subsequent proteasome-dependent degradation. Post-translationally, phosphorylation of Ser-514 inhibits nuclear localization by disrupting the intramolecular association of the FERM domain with the C-terminal tail. The dephosphorylation of Ser-514 favors the interaction with NOP53.

It is found in the cell membrane. It localises to the cell projection. The protein localises to the cytoplasm. The protein resides in the cytoskeleton. Its subcellular location is the nucleus. Probable regulator of the Hippo/SWH (Sav/Wts/Hpo) signaling pathway, a signaling pathway that plays a pivotal role in tumor suppression by restricting proliferation and promoting apoptosis. Along with WWC1 can synergistically induce the phosphorylation of LATS1 and LATS2 and can probably function in the regulation of the Hippo/SWH (Sav/Wts/Hpo) signaling pathway. May act as a membrane stabilizing protein. May inhibit PI3 kinase by binding to AGAP2 and impairing its stimulating activity. Suppresses cell proliferation and tumorigenesis by inhibiting the CUL4A-RBX1-DDB1-VprBP/DCAF1 E3 ubiquitin-protein ligase complex Plays a role in lens development and is required for complete fiber cell terminal differentiation, maintenance of cell polarity and separation of the lens vesicle from the corneal epithelium. This Rattus norvegicus (Rat) protein is Merlin (Nf2).